Consider the following 65-residue polypeptide: Alpha-insect toxin BotIT1 (65 aa).

The LCN-type CS-alpha/beta domain maps to 2–64; sequence RDAYIAQNYN…VPIRIPGKCH (63 aa). Cystine bridges form between C12/C63, C16/C36, C22/C46, and C26/C48.

The protein belongs to the long (4 C-C) scorpion toxin superfamily. Sodium channel inhibitor family. Alpha subfamily. In terms of tissue distribution, expressed by the venom gland.

The protein resides in the secreted. In terms of biological role, alpha toxins bind voltage-independently at site-3 of sodium channels (Nav) and inhibit the inactivation of the activated channels, thereby blocking neuronal transmission. This contractive toxin is highly toxic to insects and barely toxic to mammals. In Buthus occitanus tunetanus (Common European scorpion), this protein is Alpha-insect toxin BotIT1.